The sequence spans 186 residues: Tumor necrosis factor alpha-induced protein 8-like protein 1 (186 aa).

Belongs to the TNFAIP8 family. As to quaternary structure, interacts with FBXW5; TNFAIP8L1 competes with TSC2 to bind FBXW5 increasing TSC2 stability by preventing its ubiquitination.

It is found in the cytoplasm. Acts as a negative regulator of mTOR activity. The polypeptide is Tumor necrosis factor alpha-induced protein 8-like protein 1 (TNFAIP8L1) (Bos taurus (Bovine)).